The following is a 172-amino-acid chain: Adenine phosphoribosyltransferase (172 aa).

The protein belongs to the purine/pyrimidine phosphoribosyltransferase family. As to quaternary structure, homodimer.

The protein resides in the cytoplasm. It carries out the reaction AMP + diphosphate = 5-phospho-alpha-D-ribose 1-diphosphate + adenine. It functions in the pathway purine metabolism; AMP biosynthesis via salvage pathway; AMP from adenine: step 1/1. Functionally, catalyzes a salvage reaction resulting in the formation of AMP, that is energically less costly than de novo synthesis. This is Adenine phosphoribosyltransferase from Prochlorococcus marinus (strain MIT 9215).